A 1024-amino-acid chain; its full sequence is Protein sumv-1 (1024 aa).

Disordered stretches follow at residues 447 to 486, 501 to 564, 577 to 617, 645 to 664, 710 to 739, and 773 to 1024; these read DASQ…KKMP, NFQG…RRGV, PSRH…RSQA, SQMA…GSPQ, VRSG…DTVQ, and AGNS…EEEL. Polar residues-rich tracts occupy residues 467-486, 501-514, and 528-542; these read SFGT…KKMP, NFQG…SSAT, and RSQQ…QTQD. The span at 584 to 600 shows a compositional bias: low complexity; sequence SPLTPSTSTSSSQLLAP. Positions 605 to 617 are enriched in polar residues; sequence QPGTSSQTFRSQA. 2 stretches are compositionally biased toward low complexity: residues 710–730 and 784–809; these read VRSG…ASGS and AGAP…ASTS. Over residues 810–832 the composition is skewed to polar residues; it reads VPEPTKSSESSVDPQSDVSFSNP. Residues 859–870 are compositionally biased toward low complexity; it reads TLASESTSSEAT. The segment covering 873-883 has biased composition (polar residues); the sequence is HDTTSSSSAET. Residues 903-914 are compositionally biased toward basic and acidic residues; it reads PEKEKEKIDRPK. Composition is skewed to low complexity over residues 916–943, 952–962, and 970–986; these read PKSS…NQAI, SASTSSSAAST, and LLAE…QQQA. Residues 987 to 998 show a composition bias toward polar residues; that stretch reads IGSTSKNGGSTK.

It localises to the nucleus. Its subcellular location is the cytoplasm. It is found in the cell projection. The protein resides in the axon. Nuclear factor that influences the activity of genes involved in vulval development. This Caenorhabditis elegans protein is Protein sumv-1.